We begin with the raw amino-acid sequence, 239 residues long: Uridylate kinase (239 aa).

13 to 16 (KVSG) lines the ATP pocket. Position 55 (glycine 55) interacts with UMP. The ATP site is built by glycine 56 and arginine 60. Residues aspartate 75 and 136–143 (TGNPFCTT) each bind UMP. Residues threonine 163, glutamine 164, tyrosine 169, and aspartate 172 each contribute to the ATP site.

The protein belongs to the UMP kinase family. In terms of assembly, homohexamer.

It localises to the cytoplasm. It carries out the reaction UMP + ATP = UDP + ADP. It functions in the pathway pyrimidine metabolism; CTP biosynthesis via de novo pathway; UDP from UMP (UMPK route): step 1/1. Its activity is regulated as follows. Inhibited by UTP. In terms of biological role, catalyzes the reversible phosphorylation of UMP to UDP. The protein is Uridylate kinase of Rickettsia bellii (strain RML369-C).